A 792-amino-acid chain; its full sequence is Phenylalanine--tRNA ligase beta subunit (792 aa).

In terms of domain architecture, tRNA-binding spans 39–147; it reads GESLGQVVVA…DDAPVGQALA (109 aa). The region spanning 400-475 is the B5 domain; the sequence is PQPARIRLRR…RIHGYDRVPT (76 aa). Residues Asp453, Asp459, Glu462, and Glu463 each coordinate Mg(2+). In terms of domain architecture, FDX-ACB spans 698 to 791; the sequence is SRFPSVRRDL…IEREHRARIR (94 aa).

It belongs to the phenylalanyl-tRNA synthetase beta subunit family. Type 1 subfamily. As to quaternary structure, tetramer of two alpha and two beta subunits. It depends on Mg(2+) as a cofactor.

It is found in the cytoplasm. The catalysed reaction is tRNA(Phe) + L-phenylalanine + ATP = L-phenylalanyl-tRNA(Phe) + AMP + diphosphate + H(+). The chain is Phenylalanine--tRNA ligase beta subunit from Xanthomonas euvesicatoria pv. vesicatoria (strain 85-10) (Xanthomonas campestris pv. vesicatoria).